Consider the following 590-residue polypeptide: Pentatricopeptide repeat-containing protein At2g46050, mitochondrial (590 aa).

Residues Met-1 to Ile-109 constitute a mitochondrion transit peptide. 11 PPR repeats span residues Asp-141 to Ser-175, Ser-176 to Arg-206, Asp-207 to Phe-241, Asp-244 to Ile-266, Asp-275 to Arg-305, Asn-306 to Pro-340, Asp-341 to Asp-375, Phe-376 to Pro-406, Asp-407 to Lys-437, Asp-441 to Phe-471, and Glu-477 to Glu-507. Positions Ala-512 to Tyr-588 are type E motif.

It belongs to the PPR family. PCMP-E subfamily.

The protein localises to the mitochondrion. This is Pentatricopeptide repeat-containing protein At2g46050, mitochondrial (PCMP-E39) from Arabidopsis thaliana (Mouse-ear cress).